Consider the following 601-residue polypeptide: Glutamine--fructose-6-phosphate aminotransferase [isomerizing] (601 aa).

Residue Cys-2 is the Nucleophile; for GATase activity of the active site. Residues 2–218 (CGIVGYIGYD…DHEIVIVKRD (217 aa)) form the Glutamine amidotransferase type-2 domain. SIS domains are found at residues 284–423 (IIND…NHGR) and 453–591 (IATD…VDKP). Lys-596 (for Fru-6P isomerization activity) is an active-site residue.

Homodimer.

The protein localises to the cytoplasm. It carries out the reaction D-fructose 6-phosphate + L-glutamine = D-glucosamine 6-phosphate + L-glutamate. Functionally, catalyzes the first step in hexosamine metabolism, converting fructose-6P into glucosamine-6P using glutamine as a nitrogen source. The polypeptide is Glutamine--fructose-6-phosphate aminotransferase [isomerizing] (Staphylococcus epidermidis (strain ATCC 35984 / DSM 28319 / BCRC 17069 / CCUG 31568 / BM 3577 / RP62A)).